The sequence spans 341 residues: tRNA N6-adenosine threonylcarbamoyltransferase (341 aa).

Residues His-111 and His-115 each coordinate Fe cation. Substrate is bound by residues 134–138, Asp-167, Gly-180, and Asn-276; that span reads LVSGG. A Fe cation-binding site is contributed by Asp-304.

It belongs to the KAE1 / TsaD family. The cofactor is Fe(2+).

The protein localises to the cytoplasm. The enzyme catalyses L-threonylcarbamoyladenylate + adenosine(37) in tRNA = N(6)-L-threonylcarbamoyladenosine(37) in tRNA + AMP + H(+). In terms of biological role, required for the formation of a threonylcarbamoyl group on adenosine at position 37 (t(6)A37) in tRNAs that read codons beginning with adenine. Is involved in the transfer of the threonylcarbamoyl moiety of threonylcarbamoyl-AMP (TC-AMP) to the N6 group of A37, together with TsaE and TsaB. TsaD likely plays a direct catalytic role in this reaction. In Pseudomonas putida (strain W619), this protein is tRNA N6-adenosine threonylcarbamoyltransferase.